Consider the following 125-residue polypeptide: Small ribosomal subunit protein uS13 (125 aa).

The disordered stretch occupies residues 97-125; sequence PVRGQKTRSNARTRKGPRPSRIKTKKKSS. A compositionally biased stretch (basic residues) spans 101–125; the sequence is QKTRSNARTRKGPRPSRIKTKKKSS.

This sequence belongs to the universal ribosomal protein uS13 family. As to quaternary structure, part of the 30S ribosomal subunit. Forms a loose heterodimer with protein S19. Forms two bridges to the 50S subunit in the 70S ribosome.

In terms of biological role, located at the top of the head of the 30S subunit, it contacts several helices of the 16S rRNA. In the 70S ribosome it contacts the 23S rRNA (bridge B1a) and protein L5 of the 50S subunit (bridge B1b), connecting the 2 subunits; these bridges are implicated in subunit movement. Contacts the tRNAs in the A and P-sites. In Thermotoga neapolitana (strain ATCC 49049 / DSM 4359 / NBRC 107923 / NS-E), this protein is Small ribosomal subunit protein uS13.